The chain runs to 269 residues: MRCTRAIRQTARTGWLTWLAILAVTAPVTSPAWADDPPATVYRYDSRPPEDVFQNGFTAWGNNDNVLDHLTGRSCQVGSSNSAFVSTSSSRRYTEVYLEHRMQEAVEAERAGRGTGHFIGYIYEVRADNNFYGAASSYFEYVDTYGDNAGRILAGALATYQSEYLAHRRIPPENIRRVTRVYHNGITGETTTTEYSNARYVSQQTRANPNPYTSRRSVASIVGTLVRMAPVIGACMARQAESSEAMAAWSERAGEAMVLVYYESIAYSF.

Residues M1–A34 form the signal peptide. W60 lines the NAD(+) pocket. Catalysis depends on residues H69 and E163. C75 and C235 are joined by a disulfide.

It belongs to the bacterial exotoxin subunit A family. As to quaternary structure, pertussis toxin contains five different chains, S1-S5. They are organized into 2 functional subunits: A, composed of S1 (which is toxic) and B, containing S2, S3, S5, and two copies of S4 (B binds to the membrane receptors). Dimers of S2-S4 and S3-S4 are held together by S5.

It localises to the secreted. Its function is as follows. S1 is an NAD-dependent ADP-ribosyltransferase, which plays a crucial role in the pathogenesis of B.pertussis causing disruption of normal host cellular regulation. It catalyzes the ADP-ribosylation of a cysteine in the alpha subunit of host heterotrimeric G proteins. In the absence of G proteins it also catalyzes the cleavage of NAD(+) into ADP-ribose and nicotinamide. It irreversibly uncouples the G-alpha GTP-binding proteins from their membrane receptors. This Bordetella pertussis (strain Tohama I / ATCC BAA-589 / NCTC 13251) protein is Pertussis toxin subunit 1 (ptxA).